A 468-amino-acid chain; its full sequence is H(+)/Cl(-) exchange transporter ClcA (468 aa).

Over 1 to 30 (MSTRETFKISLLAKMPKDVINQFLSKDKTP) the chain is Cytoplasmic. Residues 31–67 (FSVLFLSLLVGILAGLVGTYFEQAVHLVSETRTDWLK) traverse the membrane as a helical segment. The Periplasmic portion of the chain corresponds to 68–74 (SEIGSFL). A helical membrane pass occupies residues 75–98 (PLWLAAFLISAFLAFIGYFLVHRF). The Selectivity filter part_1 motif lies at 104-108 (GSGIP). Ser105 lines the chloride pocket. The segment at residues 107–114 (IPEIEGAM) is an intramembrane region (helical). Residues 115–121 (DGMRPVR) lie on the Cytoplasmic side of the membrane. Helical transmembrane passes span 122-139 (WWRV…ALGS) and 146-164 (EGPT…SDIF). Residues 144 to 148 (GREGP) carry the Selectivity filter part_2 motif. Residues 165–174 (RVKNEDTRHS) are Cytoplasmic-facing. 2 consecutive intramembrane regions (helical) follow at residues 175–187 (LLAA…LAAA) and 191–199 (PLAGIMFVI). The Cytoplasmic portion of the chain corresponds to 200–212 (EEMRPQFRYTLIS). Residues 213-230 (VRAVIISAVAANIVFRVI) traverse the membrane as a helical segment. Topologically, residues 231–250 (NGQDAVITMPQYDAPELSTL) are periplasmic. A helical transmembrane segment spans residues 251–279 (GLFLLLGALFGVFGVLFNYLITLAQDLFV). Residues 280-285 (KFHRND) are Cytoplasmic-facing. A helical membrane pass occupies residues 286–307 (RKRYLLTGSMIGGCFGLLLLYV). Residues 308 to 327 (PELTGGGISLIPTITNGGYG) are Periplasmic-facing. 2 helical membrane passes run 328–347 (AGIL…LCFG) and 353–374 (GIFA…LIAK). The short motif at 353-357 (GIFAP) is the Selectivity filter part_3 element. The chloride site is built by Ile354 and Phe355. The Periplasmic portion of the chain corresponds to 375 to 384 (MWFPELNIEP). An intramembrane region (helical) is located at residues 385 to 399 (GMFAIAGMGALFAAT). The segment at residues 400 to 402 (VRA) is an intramembrane region (note=Loop between two helices). The helical intramembrane region spans 403–414 (PITGILLVIEMT). An intramembrane region (note=Loop between two helices) is located at residues 415–419 (NNYHL). Residues 420–436 (ILPLIITSLGAVIFAQL) form a helical membrane-spanning segment. Over 437-468 (LGGQPIYSQLLHRTLKNQKLQQQDLPPQSPNS) the chain is Cytoplasmic. Position 443 (Tyr443) interacts with chloride.

This sequence belongs to the chloride channel (TC 2.A.49) family. ClcA subfamily. As to quaternary structure, homodimer.

The protein localises to the cell inner membrane. The catalysed reaction is 2 chloride(in) + H(+)(out) = 2 chloride(out) + H(+)(in). Proton-coupled chloride transporter. Functions as antiport system and exchanges two chloride ions for 1 proton. Probably acts as an electrical shunt for an outwardly-directed proton pump that is linked to amino acid decarboxylation, as part of the extreme acid resistance (XAR) response. In Vibrio cholerae serotype O1 (strain ATCC 39315 / El Tor Inaba N16961), this protein is H(+)/Cl(-) exchange transporter ClcA.